The following is a 333-amino-acid chain: Phenylalanine--tRNA ligase alpha subunit (333 aa).

Mg(2+) is bound at residue Glu254.

The protein belongs to the class-II aminoacyl-tRNA synthetase family. Phe-tRNA synthetase alpha subunit type 1 subfamily. Tetramer of two alpha and two beta subunits. Mg(2+) is required as a cofactor.

The protein resides in the cytoplasm. The catalysed reaction is tRNA(Phe) + L-phenylalanine + ATP = L-phenylalanyl-tRNA(Phe) + AMP + diphosphate + H(+). This is Phenylalanine--tRNA ligase alpha subunit from Xylella fastidiosa (strain M12).